A 188-amino-acid chain; its full sequence is Nicotinamide/nicotinic acid mononucleotide adenylyltransferase (188 aa).

Belongs to the archaeal NMN adenylyltransferase family.

The catalysed reaction is beta-nicotinamide D-ribonucleotide + ATP + H(+) = diphosphate + NAD(+). It carries out the reaction nicotinate beta-D-ribonucleotide + ATP + H(+) = deamido-NAD(+) + diphosphate. It functions in the pathway cofactor biosynthesis; NAD(+) biosynthesis; NAD(+) from nicotinamide D-ribonucleotide: step 1/1. The protein operates within cofactor biosynthesis; NAD(+) biosynthesis; deamido-NAD(+) from nicotinate D-ribonucleotide: step 1/1. Its function is as follows. Dual substrate specificity enzyme that catalyzes the formation of NAD(+) from nicotinamide mononucleotide (NMN) and the formation of deamido-NAD(+) (NaAD) from nicotinate mononucleotide (NaMN). Shows nearly identical catalytic efficiency for both physiological substrates. Plays an essential role in all three routes of NAD biogenesis, de novo synthesis as well as the deamidating and nondeamidating salvage pathways. The polypeptide is Nicotinamide/nicotinic acid mononucleotide adenylyltransferase (Acinetobacter baylyi (strain ATCC 33305 / BD413 / ADP1)).